We begin with the raw amino-acid sequence, 102 residues long: Small ribosomal subunit protein uS10 (102 aa).

The protein belongs to the universal ribosomal protein uS10 family. As to quaternary structure, part of the 30S ribosomal subunit.

In terms of biological role, involved in the binding of tRNA to the ribosomes. The protein is Small ribosomal subunit protein uS10 of Parafrankia sp. (strain EAN1pec).